The sequence spans 314 residues: Ribosomal protein L11 methyltransferase (314 aa).

Residues Thr166, Gly187, Asp209, and Asn251 each coordinate S-adenosyl-L-methionine.

Belongs to the methyltransferase superfamily. PrmA family.

The protein resides in the cytoplasm. It carries out the reaction L-lysyl-[protein] + 3 S-adenosyl-L-methionine = N(6),N(6),N(6)-trimethyl-L-lysyl-[protein] + 3 S-adenosyl-L-homocysteine + 3 H(+). Functionally, methylates ribosomal protein L11. The polypeptide is Ribosomal protein L11 methyltransferase (Clostridium tetani (strain Massachusetts / E88)).